The primary structure comprises 251 residues: 7-cyano-7-deazaguanine synthase (251 aa).

The interval 1–21 is disordered; sequence MSDLPRHSPRRQHAGESAVTA. ATP is bound at residue 35–45; the sequence is YSGGMDSYTVL. Zn(2+)-binding residues include Cys-212, Cys-220, Cys-223, and Cys-226.

This sequence belongs to the QueC family. Requires Zn(2+) as cofactor.

The catalysed reaction is 7-carboxy-7-deazaguanine + NH4(+) + ATP = 7-cyano-7-deazaguanine + ADP + phosphate + H2O + H(+). It participates in purine metabolism; 7-cyano-7-deazaguanine biosynthesis. Catalyzes the ATP-dependent conversion of 7-carboxy-7-deazaguanine (CDG) to 7-cyano-7-deazaguanine (preQ(0)). The chain is 7-cyano-7-deazaguanine synthase from Chromohalobacter salexigens (strain ATCC BAA-138 / DSM 3043 / CIP 106854 / NCIMB 13768 / 1H11).